A 269-amino-acid polypeptide reads, in one-letter code: Serine/threonine-protein kinase ZRK7 (269 aa).

Residues 80-269 (FDWSYAIGVD…KNRLMVTVIT (190 aa)) form the Protein kinase domain. ATP-binding positions include 86-94 (IGVDRFVWY) and K106. Residue D205 is the Proton acceptor of the active site.

Belongs to the protein kinase superfamily. Ser/Thr protein kinase family. ZRK subfamily.

The enzyme catalyses L-seryl-[protein] + ATP = O-phospho-L-seryl-[protein] + ADP + H(+). It carries out the reaction L-threonyl-[protein] + ATP = O-phospho-L-threonyl-[protein] + ADP + H(+). The chain is Serine/threonine-protein kinase ZRK7 from Arabidopsis thaliana (Mouse-ear cress).